The following is a 795-amino-acid chain: Phenylalanine--tRNA ligase beta subunit (795 aa).

In terms of domain architecture, tRNA-binding spans 39-148 (AGDFSGVVVG…QNAPVGTNLR (110 aa)). The region spanning 401–476 (PKLNQVSLRR…RIYGYNSIPN (76 aa)) is the B5 domain. 4 residues coordinate Mg(2+): D454, D460, E463, and E464. An FDX-ACB domain is found at 701–794 (SRFPANRRDL…LKQRFNAYLR (94 aa)).

Belongs to the phenylalanyl-tRNA synthetase beta subunit family. Type 1 subfamily. As to quaternary structure, tetramer of two alpha and two beta subunits. Requires Mg(2+) as cofactor.

Its subcellular location is the cytoplasm. The catalysed reaction is tRNA(Phe) + L-phenylalanine + ATP = L-phenylalanyl-tRNA(Phe) + AMP + diphosphate + H(+). This chain is Phenylalanine--tRNA ligase beta subunit (pheT), found in Pasteurella multocida (strain Pm70).